Reading from the N-terminus, the 113-residue chain is Large ribosomal subunit protein bL17 (113 aa).

It belongs to the bacterial ribosomal protein bL17 family. In terms of assembly, part of the 50S ribosomal subunit. Contacts protein L32.

The sequence is that of Large ribosomal subunit protein bL17 from Clostridium tetani (strain Massachusetts / E88).